A 189-amino-acid chain; its full sequence is UPF0316 protein Sca_1484 (189 aa).

3 helical membrane-spanning segments follow: residues Pro8 to Val28, Val40 to Met60, and Phe66 to Ile86.

It belongs to the UPF0316 family.

The protein resides in the cell membrane. This Staphylococcus carnosus (strain TM300) protein is UPF0316 protein Sca_1484.